The following is a 411-amino-acid chain: Epoxyqueuosine reductase (411 aa).

The active-site Proton donor is Asp-171. The 4Fe-4S ferredoxin-type domain occupies Leu-213–Thr-245. Residues Cys-225, Cys-228, Cys-231, Cys-235, Cys-251, Cys-278, Cys-281, and Cys-285 each coordinate [4Fe-4S] cluster.

Belongs to the QueG family. As to quaternary structure, monomer. The cofactor is cob(II)alamin. [4Fe-4S] cluster is required as a cofactor.

Its subcellular location is the cytoplasm. It catalyses the reaction epoxyqueuosine(34) in tRNA + AH2 = queuosine(34) in tRNA + A + H2O. It participates in tRNA modification; tRNA-queuosine biosynthesis. Its function is as follows. Catalyzes the conversion of epoxyqueuosine (oQ) to queuosine (Q), which is a hypermodified base found in the wobble positions of tRNA(Asp), tRNA(Asn), tRNA(His) and tRNA(Tyr). This chain is Epoxyqueuosine reductase, found in Yersinia pestis.